The sequence spans 149 residues: Transcriptional repressor NrdR (149 aa).

A zinc finger lies at 3–34 (CPFCFAVDTKVIDSRLVGEGSSVRRRRQCLVC). The ATP-cone domain occupies 49-139 (PRVIKSNDVR…VYRSFEDIKD (91 aa)).

Belongs to the NrdR family. The cofactor is Zn(2+).

Its function is as follows. Negatively regulates transcription of bacterial ribonucleotide reductase nrd genes and operons by binding to NrdR-boxes. The chain is Transcriptional repressor NrdR from Salmonella schwarzengrund (strain CVM19633).